A 35-amino-acid chain; its full sequence is Thrombin-like enzyme cerastobin (35 aa).

One can recognise a Peptidase S1 domain in the interval 1–35 (VIGGAKCNINEHRSIVLLYSSRLFGHTLINKEWVL).

Belongs to the peptidase S1 family. Snake venom subfamily. Monomer. As to expression, expressed by the venom gland.

It is found in the secreted. With respect to regulation, inhibited by diisopropylfluorophosphate (DFP). In terms of biological role, thrombin-like snake venom serine protease, that cleaves both alpha-chain (FGA) and beta-chain (FGB) of fibrinogen. Partially degrades factor X (F10), and release bradykinin from kininogen (KNG). Potently induces platelet aggregation. Shows a proteolytic activity towards protein constituents of the platelets cytoskeleton. Hydrolyzes actin, actin-binding protein, and P235. Shows a preferential cleavage at Arg-|-Xaa bonds. The polypeptide is Thrombin-like enzyme cerastobin (Cerastes vipera (Sahara sand viper)).